The following is a 367-amino-acid chain: NADH-quinone oxidoreductase subunit D (367 aa).

It belongs to the complex I 49 kDa subunit family. As to quaternary structure, NDH-1 is composed of 14 different subunits. Subunits NuoB, C, D, E, F, and G constitute the peripheral sector of the complex.

The protein resides in the cell membrane. It carries out the reaction a quinone + NADH + 5 H(+)(in) = a quinol + NAD(+) + 4 H(+)(out). Functionally, NDH-1 shuttles electrons from NADH, via FMN and iron-sulfur (Fe-S) centers, to quinones in the respiratory chain. The immediate electron acceptor for the enzyme in this species is believed to be ubiquinone. Couples the redox reaction to proton translocation (for every two electrons transferred, four hydrogen ions are translocated across the cytoplasmic membrane), and thus conserves the redox energy in a proton gradient. This Dehalococcoides mccartyi (strain ATCC BAA-2266 / KCTC 15142 / 195) (Dehalococcoides ethenogenes (strain 195)) protein is NADH-quinone oxidoreductase subunit D.